A 358-amino-acid chain; its full sequence is Phospho-N-acetylmuramoyl-pentapeptide-transferase (358 aa).

10 helical membrane passes run 21–41 (YLTL…FVVG), 71–91 (TMGG…WADL), 95–115 (YIWV…VDDY), 133–153 (FWQS…ASVA), 166–186 (VAVN…VGSS), 197–217 (GLAV…AYAA), 234–254 (AGEL…FLWF), 261–281 (VFMG…LAVL), 286–306 (LVLF…MLQV), and 337–357 (IVRF…TLKI).

It belongs to the glycosyltransferase 4 family. MraY subfamily. The cofactor is Mg(2+).

It is found in the cell inner membrane. It catalyses the reaction UDP-N-acetyl-alpha-D-muramoyl-L-alanyl-gamma-D-glutamyl-meso-2,6-diaminopimeloyl-D-alanyl-D-alanine + di-trans,octa-cis-undecaprenyl phosphate = di-trans,octa-cis-undecaprenyl diphospho-N-acetyl-alpha-D-muramoyl-L-alanyl-D-glutamyl-meso-2,6-diaminopimeloyl-D-alanyl-D-alanine + UMP. It participates in cell wall biogenesis; peptidoglycan biosynthesis. Its function is as follows. Catalyzes the initial step of the lipid cycle reactions in the biosynthesis of the cell wall peptidoglycan: transfers peptidoglycan precursor phospho-MurNAc-pentapeptide from UDP-MurNAc-pentapeptide onto the lipid carrier undecaprenyl phosphate, yielding undecaprenyl-pyrophosphoryl-MurNAc-pentapeptide, known as lipid I. In Nitrosococcus oceani (strain ATCC 19707 / BCRC 17464 / JCM 30415 / NCIMB 11848 / C-107), this protein is Phospho-N-acetylmuramoyl-pentapeptide-transferase.